A 341-amino-acid chain; its full sequence is Porin-like protein L (341 aa).

The signal sequence occupies residues 1-21; the sequence is MNKKLIALAVAAASISSVATA.

It belongs to the Gram-negative porin family. In terms of assembly, homotrimer.

Its subcellular location is the cell outer membrane. Forms pores that allow passive diffusion of small molecules across the outer membrane. The protein is Porin-like protein L (ompL) of Photobacterium profundum (strain SS9).